The following is a 330-amino-acid chain: GDP-mannose transporter (330 aa).

The Cytoplasmic segment spans residues 1 to 13 (MSQLKVDNGPLSH). Residues 14 to 34 (VANSGPISIGAYCFSSIMMTV) form a helical membrane-spanning segment. Residues 35 to 48 (TNKFVVNLKGFNMN) are Lumenal-facing. Residues 49 to 69 (FVMLFVQAAVCVNLLFFLRLL) form a helical membrane-spanning segment. Residues 70-81 (GYAKFRPLNRTD) lie on the Cytoplasmic side of the membrane. The chain crosses the membrane as a helical span at residues 82-98 (AKNWFPITIFLVLMIYT). At 99-104 (SSKSLQ) the chain is on the lumenal side. Residues 105–124 (YLAVPIYTIFKNLTIILIAY) form a helical membrane-spanning segment. The Cytoplasmic segment spans residues 125–138 (GEVLFFGGSVTAME). A helical membrane pass occupies residues 139–155 (LSSFLLMVLSSVVATLG). Residues 156–170 (DQQALKKTADAGASL) lie on the Lumenal side of the membrane. A helical membrane pass occupies residues 171-191 (FNIGYMWMFINCLSSAAFVLV). Topologically, residues 192–203 (MRKRIKLTNFKD) are cytoplasmic. A helical membrane pass occupies residues 204-224 (FDTMFYNNILSMPVLLALSFL). Topologically, residues 225–241 (MEDWSTENLTKNLSRDS) are lumenal. Residues 242–262 (VTAMIISGMTAVCISYCSGWC) form a helical membrane-spanning segment. Residues 263 to 269 (VRVTSST) are Cytoplasmic-facing. Residues 270–290 (TYSMVGALNKLPIALSGLIFF) form a helical membrane-spanning segment. At 291 to 294 (DAPK) the chain is on the lumenal side. A helical transmembrane segment spans residues 295 to 315 (NFLSIFSIFLGFLSGIVYAVA). The Cytoplasmic portion of the chain corresponds to 316 to 330 (KQKKQQNPQPSAPIK).

Belongs to the TPT transporter family. SLC35D subfamily. Homooligomer.

The protein resides in the golgi apparatus membrane. It is found in the cytoplasmic vesicle membrane. It localises to the endoplasmic reticulum membrane. Its function is as follows. Involved in the import of GDP-mannose from the cytoplasm into the Golgi lumen. In Kluyveromyces lactis (strain ATCC 8585 / CBS 2359 / DSM 70799 / NBRC 1267 / NRRL Y-1140 / WM37) (Yeast), this protein is GDP-mannose transporter (VRG4).